Consider the following 296-residue polypeptide: Cytidine deaminase (296 aa).

2 consecutive CMP/dCMP-type deaminase domains span residues 47–167 (TEAE…FGPK) and 186–296 (DSSD…VDPV). 88–90 (NLE) contributes to the substrate binding site. Residue histidine 101 participates in Zn(2+) binding. Glutamate 103 (proton donor) is an active-site residue. 2 residues coordinate Zn(2+): cysteine 128 and cysteine 131.

This sequence belongs to the cytidine and deoxycytidylate deaminase family. As to quaternary structure, homodimer. The cofactor is Zn(2+).

The enzyme catalyses cytidine + H2O + H(+) = uridine + NH4(+). It catalyses the reaction 2'-deoxycytidine + H2O + H(+) = 2'-deoxyuridine + NH4(+). Its function is as follows. This enzyme scavenges exogenous and endogenous cytidine and 2'-deoxycytidine for UMP synthesis. This Shewanella sp. (strain W3-18-1) protein is Cytidine deaminase.